A 224-amino-acid polypeptide reads, in one-letter code: Phosphoribosylformylglycinamidine synthase subunit PurQ (224 aa).

Positions 4-224 (FGIIVFPGSN…ATDGLAMFIS (221 aa)) constitute a Glutamine amidotransferase type-1 domain. Cysteine 87 (nucleophile) is an active-site residue. Catalysis depends on residues histidine 204 and glutamate 206.

As to quaternary structure, part of the FGAM synthase complex composed of 1 PurL, 1 PurQ and 2 PurS subunits.

The protein resides in the cytoplasm. The catalysed reaction is N(2)-formyl-N(1)-(5-phospho-beta-D-ribosyl)glycinamide + L-glutamine + ATP + H2O = 2-formamido-N(1)-(5-O-phospho-beta-D-ribosyl)acetamidine + L-glutamate + ADP + phosphate + H(+). It catalyses the reaction L-glutamine + H2O = L-glutamate + NH4(+). The protein operates within purine metabolism; IMP biosynthesis via de novo pathway; 5-amino-1-(5-phospho-D-ribosyl)imidazole from N(2)-formyl-N(1)-(5-phospho-D-ribosyl)glycinamide: step 1/2. In terms of biological role, part of the phosphoribosylformylglycinamidine synthase complex involved in the purines biosynthetic pathway. Catalyzes the ATP-dependent conversion of formylglycinamide ribonucleotide (FGAR) and glutamine to yield formylglycinamidine ribonucleotide (FGAM) and glutamate. The FGAM synthase complex is composed of three subunits. PurQ produces an ammonia molecule by converting glutamine to glutamate. PurL transfers the ammonia molecule to FGAR to form FGAM in an ATP-dependent manner. PurS interacts with PurQ and PurL and is thought to assist in the transfer of the ammonia molecule from PurQ to PurL. The polypeptide is Phosphoribosylformylglycinamidine synthase subunit PurQ (Synechocystis sp. (strain ATCC 27184 / PCC 6803 / Kazusa)).